The primary structure comprises 214 residues: Small ribosomal subunit protein eS6 (214 aa).

Belongs to the eukaryotic ribosomal protein eS6 family.

In Saccharolobus solfataricus (strain ATCC 35092 / DSM 1617 / JCM 11322 / P2) (Sulfolobus solfataricus), this protein is Small ribosomal subunit protein eS6.